We begin with the raw amino-acid sequence, 1599 residues long: Lacto-N-biosidase (1599 aa).

A signal peptide (tat-type signal) is located at residues 1–30 (MTSRQGRQAIAATAAMGVAVALALPTAAFA). Position 150 (His-150) interacts with beta-D-galactosyl-(1-&gt;3)-N-acetyl-D-glucosamine. 6 PbH1 repeats span residues 165–190 (VSYI…DTWK), 224–255 (MSNV…YFMA), 277–299 (FDHV…AVGY), 325–347 (STNV…TLMY), 348–388 (CDRP…WPWR), and 389–437 (CKDP…SFAS). Residues Asp-178, Asp-179, Val-182, and Asp-238 each coordinate Ca(2+). Beta-D-galactosyl-(1-&gt;3)-N-acetyl-D-glucosamine-binding residues include Lys-244 and His-245. Beta-D-galactosyl-(1-&gt;3)-N-acetyl-D-glucosamine-binding residues include Trp-387, Asp-411, Asp-418, and Cys-441. Asp-411 (proton donor/acceptor) is an active-site residue. The active-site Nucleophile is Asp-418. The stretch at 469-506 (GPGNHIYNNTVYVDADSQVLTKRSNSQSLFENNIFINA) is one PbH1 7 repeat. The region spanning 1436–1498 (DKSTLKATVE…NALRDAIDGL (63 aa)) is the FIVAR domain. Over residues 1494–1509 (AIDGLEKKPVDPDPNP) the composition is skewed to basic and acidic residues. The tract at residues 1494–1568 (AIDGLEKKPV…DGATTGGKLT (75 aa)) is disordered. Residues 1535–1558 (DGSGNGSGTGNGSGSGNGSTGSGS) are compositionally biased toward gly residues. The span at 1559–1568 (DGATTGGKLT) shows a compositional bias: low complexity. Residues 1574–1594 (VAGAAAMVALTAAAGIGLAAA) form a helical membrane-spanning segment.

The protein belongs to the glycosyl hydrolase 136 (GH136) family. Homodimer. Requires Ca(2+) as cofactor. Mg(2+) is required as a cofactor. In terms of processing, predicted to be exported by the Tat system. The position of the signal peptide cleavage has not been experimentally proven.

The protein localises to the cell membrane. It carries out the reaction beta-D-Gal-(1-&gt;3)-beta-D-GlcNAc-(1-&gt;3)-beta-D-Gal-(1-&gt;4)-D-Glc + H2O = beta-D-galactosyl-(1-&gt;3)-N-acetyl-D-glucosamine + lactose. Requires the chaperone LnbY for its proper folding and active expression. Is potently and competitively inhibited by LNB-PUGNAc and LNB-NHAcDNJ in vitro. Functionally, present in the infant gut, this enzyme is involved in the assimilation of type-1 human milk oligosaccharides (HMOs). It hydrolyzes via a retaining mechanism the beta-D-GlcNAc-(1-&gt;3)-beta-D-Gal linkage in lacto-N-tetraose (LNT or beta-D-Gal-(1-&gt;3)-beta-D-GlcNAc-(1-&gt;3)-beta-D-Gal-(1-&gt;4)-D-Glc), an abundant HMO unique to human breast milk, releasing lacto-N-biose (LNB or beta-D-Gal-(1-&gt;3)-D-GlcNAc) and lactose. With a much lower efficiency, is also able to cleave the same linkage in lacto-N-fucopentaose I (alpha-Fuc(1-&gt;2)-beta-D-Gal-(1-&gt;3)-beta-D-GlcNAc(1-&gt;3)-beta-D-Gal-(1-&gt;4)-D-Glc), and sialyllacto-N-tetraose a (alpha-Neu5Ac-(2-&gt;3)-beta-D-Gal-(1-&gt;3)-beta-D-GlcNAc-(1-&gt;3)-beta-D-Gal-(1-&gt;4)-D-Glc). Is a key enzymatic factor for growth and proliferation of B.longum in the gut ecosystem of breast-fed infants. The sequence is that of Lacto-N-biosidase from Bifidobacterium longum subsp. longum (strain ATCC 15707 / DSM 20219 / JCM 1217 / NCTC 11818 / E194b).